Here is a 612-residue protein sequence, read N- to C-terminus: 2-isopropylmalate synthase B (612 aa).

Residues 71-344 (VRIFDTTLRD…YTGINTQHIL (274 aa)) form the Pyruvate carboxyltransferase domain. A divalent metal cation-binding residues include Asp80, His277, and Asn313.

The protein belongs to the alpha-IPM synthase/homocitrate synthase family. LeuA type 1 subfamily. In terms of assembly, homodimer. A divalent metal cation is required as a cofactor.

It carries out the reaction 3-methyl-2-oxobutanoate + acetyl-CoA + H2O = (2S)-2-isopropylmalate + CoA + H(+). Its pathway is amino-acid biosynthesis; L-leucine biosynthesis; L-leucine from 3-methyl-2-oxobutanoate: step 1/4. Functionally, catalyzes the condensation of the acetyl group of acetyl-CoA with 3-methyl-2-oxobutanoate (2-oxoisovalerate) to form 3-carboxy-3-hydroxy-4-methylpentanoate (2-isopropylmalate). This chain is 2-isopropylmalate synthase B (IPMSB), found in Solanum pennellii (Tomato).